The following is a 304-amino-acid chain: Aspartate carbamoyltransferase catalytic subunit (304 aa).

Carbamoyl phosphate is bound by residues Arg-49 and Thr-50. Lys-77 is a binding site for L-aspartate. Arg-99, His-127, and Gln-130 together coordinate carbamoyl phosphate. L-aspartate contacts are provided by Arg-160 and Arg-211. Carbamoyl phosphate-binding residues include Ala-252 and Pro-253.

Belongs to the aspartate/ornithine carbamoyltransferase superfamily. ATCase family. Heterododecamer (2C3:3R2) of six catalytic PyrB chains organized as two trimers (C3), and six regulatory PyrI chains organized as three dimers (R2).

It carries out the reaction carbamoyl phosphate + L-aspartate = N-carbamoyl-L-aspartate + phosphate + H(+). The protein operates within pyrimidine metabolism; UMP biosynthesis via de novo pathway; (S)-dihydroorotate from bicarbonate: step 2/3. In terms of biological role, catalyzes the condensation of carbamoyl phosphate and aspartate to form carbamoyl aspartate and inorganic phosphate, the committed step in the de novo pyrimidine nucleotide biosynthesis pathway. The protein is Aspartate carbamoyltransferase catalytic subunit of Bacillus cytotoxicus (strain DSM 22905 / CIP 110041 / 391-98 / NVH 391-98).